A 118-amino-acid chain; its full sequence is UPF0344 protein Aflv_2205 (118 aa).

A run of 4 helical transmembrane segments spans residues 4–24 (AHIT…ALQA), 32–52 (MLHM…AWIL), 60–80 (FLYI…EMIL), and 96–116 (FIVA…GFSF).

It belongs to the UPF0344 family.

The protein resides in the cell membrane. This is UPF0344 protein Aflv_2205 from Anoxybacillus flavithermus (strain DSM 21510 / WK1).